The primary structure comprises 258 residues: UPF0328 protein ECU07_0060 (258 aa).

This sequence belongs to the UPF0328 family.

This is UPF0328 protein ECU07_0060 from Encephalitozoon cuniculi (strain GB-M1) (Microsporidian parasite).